Consider the following 277-residue polypeptide: Probable ABC transporter permease protein y4oR (277 aa).

Transmembrane regions (helical) follow at residues 15–35 (LWTL…TWMV), 79–99 (VVTI…AYAL), 109–129 (LLVA…VPVY), 140–160 (TYQA…IWLM), 189–209 (IMMP…FIAV), 213–233 (FLFA…AMLG), and 242–262 (WDAV…FAFI). In terms of domain architecture, ABC transmembrane type-1 spans 74–263 (IINSAVVTIV…TPVIAFAFIM (190 aa)).

This sequence belongs to the binding-protein-dependent transport system permease family. MalFG subfamily.

It localises to the cell inner membrane. Probably part of the binding-protein-dependent transport system y4oPQRS. This system probably transports a sugar-like molecule. Probably responsible for the translocation of the substrate across the membrane. This is Probable ABC transporter permease protein y4oR from Sinorhizobium fredii (strain NBRC 101917 / NGR234).